The chain runs to 84 residues: PAMP-induced secreted peptide 2 (84 aa).

A signal peptide spans 1–24; it reads MMMNKNVLSSILFFMLIGSVLVES. The interval 50-84 is disordered; that stretch reads KDSGPSPGEGHKVVDRKDTFRFVKHSGPSPSGPGH. Over residues 58–70 the composition is skewed to basic and acidic residues; it reads EGHKVVDRKDTFR. Proline 77 and proline 79 each carry 4-hydroxyproline.

Post-translationally, contains 4-hydroxyproline; hydroxylated on Pro-77 and Pro-79.

It is found in the secreted. Its subcellular location is the extracellular space. It localises to the apoplast. Functionally, endogenous secreted peptide that acts as elicitor of immune response and positive regulator of defense response. Amplifies the immune response triggered by flg22, the active epitope of bacterial flagellin. Acts as a negative regulator of root growth. The chain is PAMP-induced secreted peptide 2 from Arabidopsis thaliana (Mouse-ear cress).